The following is a 445-amino-acid chain: Phosphoglucosamine mutase (445 aa).

Ser-102 acts as the Phosphoserine intermediate in catalysis. Mg(2+) contacts are provided by Ser-102, Asp-241, Asp-243, and Asp-245. Residue Ser-102 is modified to Phosphoserine.

It belongs to the phosphohexose mutase family. Mg(2+) serves as cofactor. In terms of processing, activated by phosphorylation.

The catalysed reaction is alpha-D-glucosamine 1-phosphate = D-glucosamine 6-phosphate. Functionally, catalyzes the conversion of glucosamine-6-phosphate to glucosamine-1-phosphate. This Escherichia coli O127:H6 (strain E2348/69 / EPEC) protein is Phosphoglucosamine mutase.